Consider the following 340-residue polypeptide: Holliday junction branch migration complex subunit RuvB (340 aa).

The segment at 1–181 (MDRIVEIEKA…FGMQFRLNFY (181 aa)) is large ATPase domain (RuvB-L). Residues Leu-20, Arg-21, Gly-62, Lys-65, Thr-66, Thr-67, 128-130 (EDF), Arg-171, Tyr-181, and Arg-218 contribute to the ATP site. Thr-66 provides a ligand contact to Mg(2+). The tract at residues 182-252 (TSDELAKIVQ…RAKSSLDALG (71 aa)) is small ATPAse domain (RuvB-S). The segment at 255 to 340 (DLGFDEMDLK…TQKGLFDEDQ (86 aa)) is head domain (RuvB-H). Positions 309 and 314 each coordinate DNA.

It belongs to the RuvB family. As to quaternary structure, homohexamer. Forms an RuvA(8)-RuvB(12)-Holliday junction (HJ) complex. HJ DNA is sandwiched between 2 RuvA tetramers; dsDNA enters through RuvA and exits via RuvB. An RuvB hexamer assembles on each DNA strand where it exits the tetramer. Each RuvB hexamer is contacted by two RuvA subunits (via domain III) on 2 adjacent RuvB subunits; this complex drives branch migration. In the full resolvosome a probable DNA-RuvA(4)-RuvB(12)-RuvC(2) complex forms which resolves the HJ.

It localises to the cytoplasm. The enzyme catalyses ATP + H2O = ADP + phosphate + H(+). In terms of biological role, the RuvA-RuvB-RuvC complex processes Holliday junction (HJ) DNA during genetic recombination and DNA repair, while the RuvA-RuvB complex plays an important role in the rescue of blocked DNA replication forks via replication fork reversal (RFR). RuvA specifically binds to HJ cruciform DNA, conferring on it an open structure. The RuvB hexamer acts as an ATP-dependent pump, pulling dsDNA into and through the RuvAB complex. RuvB forms 2 homohexamers on either side of HJ DNA bound by 1 or 2 RuvA tetramers; 4 subunits per hexamer contact DNA at a time. Coordinated motions by a converter formed by DNA-disengaged RuvB subunits stimulates ATP hydrolysis and nucleotide exchange. Immobilization of the converter enables RuvB to convert the ATP-contained energy into a lever motion, pulling 2 nucleotides of DNA out of the RuvA tetramer per ATP hydrolyzed, thus driving DNA branch migration. The RuvB motors rotate together with the DNA substrate, which together with the progressing nucleotide cycle form the mechanistic basis for DNA recombination by continuous HJ branch migration. Branch migration allows RuvC to scan DNA until it finds its consensus sequence, where it cleaves and resolves cruciform DNA. This Campylobacter hominis (strain ATCC BAA-381 / DSM 21671 / CCUG 45161 / LMG 19568 / NCTC 13146 / CH001A) protein is Holliday junction branch migration complex subunit RuvB.